A 701-amino-acid chain; its full sequence is Polyribonucleotide nucleotidyltransferase (701 aa).

Mg(2+) is bound by residues Asp-480 and Asp-486. Residues 547–606 (PKIDTIKIDVDKIKVVIGKGGETIDKIIAETGVKIDIDDEGNVSIYSSDQAAINRTKEII) form the KH domain. The S1 motif domain occupies 616-684 (GEVYHAKVVR…EKGRVDASMK (69 aa)). Positions 682–701 (SMKALIPRPPKPEKKEEKHD) are disordered. The span at 691 to 701 (PKPEKKEEKHD) shows a compositional bias: basic and acidic residues.

The protein belongs to the polyribonucleotide nucleotidyltransferase family. It depends on Mg(2+) as a cofactor.

The protein resides in the cytoplasm. It catalyses the reaction RNA(n+1) + phosphate = RNA(n) + a ribonucleoside 5'-diphosphate. Functionally, involved in mRNA degradation. Catalyzes the phosphorolysis of single-stranded polyribonucleotides processively in the 3'- to 5'-direction. The polypeptide is Polyribonucleotide nucleotidyltransferase (Streptococcus pyogenes serotype M12 (strain MGAS2096)).